Consider the following 121-residue polypeptide: Large ribosomal subunit protein uL22 (121 aa).

Belongs to the universal ribosomal protein uL22 family. As to quaternary structure, part of the 50S ribosomal subunit.

In terms of biological role, this protein binds specifically to 23S rRNA; its binding is stimulated by other ribosomal proteins, e.g. L4, L17, and L20. It is important during the early stages of 50S assembly. It makes multiple contacts with different domains of the 23S rRNA in the assembled 50S subunit and ribosome. Its function is as follows. The globular domain of the protein is located near the polypeptide exit tunnel on the outside of the subunit, while an extended beta-hairpin is found that lines the wall of the exit tunnel in the center of the 70S ribosome. The polypeptide is Large ribosomal subunit protein uL22 (Synechococcus sp. (strain CC9311)).